Here is a 183-residue protein sequence, read N- to C-terminus: Adenine phosphoribosyltransferase (183 aa).

It belongs to the purine/pyrimidine phosphoribosyltransferase family. As to quaternary structure, homodimer.

The protein resides in the cytoplasm. The catalysed reaction is AMP + diphosphate = 5-phospho-alpha-D-ribose 1-diphosphate + adenine. It participates in purine metabolism; AMP biosynthesis via salvage pathway; AMP from adenine: step 1/1. Its function is as follows. Catalyzes a salvage reaction resulting in the formation of AMP, that is energically less costly than de novo synthesis. The sequence is that of Adenine phosphoribosyltransferase from Shewanella oneidensis (strain ATCC 700550 / JCM 31522 / CIP 106686 / LMG 19005 / NCIMB 14063 / MR-1).